A 78-amino-acid chain; its full sequence is Dermaseptin-B1 (78 aa).

The N-terminal stretch at 1–22 is a signal peptide; the sequence is MDILKKSLFLVLFLGLVSLSIC. A propeptide spanning residues 23 to 42 is cleaved from the precursor; sequence EEEKRENEDEEKQDDEQSEM. Q75 bears the Glutamine amide mark. A propeptide spanning residues 76 to 78 is cleaved from the precursor; sequence GEQ.

The protein belongs to the frog skin active peptide (FSAP) family. Dermaseptin subfamily. Expressed by the skin glands.

Its subcellular location is the secreted. Its function is as follows. Possesses a potent antimicrobial activity against bacteria, fungi and protozoa. Probably acts by disturbing membrane functions with its amphipathic structure. This is Dermaseptin-B1 from Phyllomedusa bicolor (Two-colored leaf frog).